Consider the following 332-residue polypeptide: Probable farnesyl diphosphate synthase (332 aa).

Isopentenyl diphosphate is bound by residues lysine 75, arginine 78, and histidine 107. Positions 114 and 120 each coordinate Mg(2+). Position 125 (arginine 125) interacts with (2E)-geranyl diphosphate. Arginine 126 provides a ligand contact to isopentenyl diphosphate. (2E)-geranyl diphosphate is bound by residues lysine 208, glutamine 250, and lysine 267.

Belongs to the FPP/GGPP synthase family. It depends on Mg(2+) as a cofactor.

It localises to the cytoplasm. It catalyses the reaction isopentenyl diphosphate + (2E)-geranyl diphosphate = (2E,6E)-farnesyl diphosphate + diphosphate. This Sinorhizobium fredii (strain NBRC 101917 / NGR234) protein is Probable farnesyl diphosphate synthase.